Reading from the N-terminus, the 356-residue chain is NF-kappa-B inhibitor beta (356 aa).

Phosphoserine; by RPS6KA1 occurs at positions 19 and 23. ANK repeat units lie at residues 57–86 (DGDT…GTEY), 93–122 (LGQT…GLCV), and 126–155 (RGHT…RRPR). Residues 149 to 193 (PRPRRPREAPDTYLAQGPDRTPDTNHTPVALYPDSDLEKEEEESE) are disordered. S183 is subject to Phosphoserine. Over residues 183 to 193 (SDLEKEEEESE) the composition is skewed to acidic residues. ANK repeat units follow at residues 206-235 (EGHT…DLDK), 240-269 (CGRS…NPAA), and 273-302 (GGRT…PEPE). Residues 298-356 (APEPEGEDEKSGPCSSSSDSDSGDEGDEYDDIVVHSSRSQTRLPPTPASKPLPDDPRPV) form a disordered region. Phosphoserine; by CK2 occurs at positions 313 and 315. Residues 318 to 328 (DSGDEGDEYDD) show a composition bias toward acidic residues.

It belongs to the NF-kappa-B inhibitor family. As to quaternary structure, interacts with THRB (via ligand-binding domain). Interacts with RELA and REL. Interacts with COMMD1. Interacts with inhibitor kappa B-interacting Ras-like NKIRAS1 and NKIRAS2. In terms of processing, phosphorylated by RPS6KA1; followed by degradation. Interaction with NKIRAS1 and NKIRAS2 probably prevents phosphorylation. As to expression, expressed in all tissues examined.

It is found in the cytoplasm. The protein localises to the nucleus. In terms of biological role, inhibits NF-kappa-B by complexing with and trapping it in the cytoplasm. However, the unphosphorylated form resynthesized after cell stimulation is able to bind NF-kappa-B allowing its transport to the nucleus and protecting it to further NFKBIA-dependent inactivation. Association with inhibitor kappa B-interacting NKIRAS1 and NKIRAS2 prevent its phosphorylation rendering it more resistant to degradation, explaining its slower degradation. The chain is NF-kappa-B inhibitor beta (NFKBIB) from Homo sapiens (Human).